The chain runs to 328 residues: MKNVFLTGGSGFLGKYIIEELISNGYKVFALSRSETSNKVLSQMGATPVMSSLHDEQGLTEAIKGCDIVIHCAAKLETNSESVQELYKDNIDATELLFNICNQSSTSSVSVFCFISSEGVIMNGENINNATEDTPYPPIEQLGWYNKSKAISEQFLLATQSSMSRMKTIVIRLPLVWGSRDNVLDYLVGLCNKFQWFWIGGGKNYLSIVHAKNASYGIRLAIEKGDNQDIFHLTDGESVQYRKFFTDRFKKKGVSTNKLHMVLPTPIALSLVWIMALIWKLFNLKGLPLLTKTGLIYSSKNFTINDDKARLKLGYTNKINYNQGMDEL.

Residue Tyr145 is the Proton acceptor of the active site. NAD(+) is bound at residue Lys149. A helical transmembrane segment spans residues 259–279 (LHMVLPTPIALSLVWIMALIW).

This sequence belongs to the 3-beta-HSD family. In terms of assembly, homodimer.

Its subcellular location is the endoplasmic reticulum membrane. It is found in the lipid droplet. The catalysed reaction is a 3beta-hydroxysteroid-4alpha-carboxylate + NADP(+) = a 3-oxosteroid + CO2 + NADPH. The enzyme catalyses a 3beta-hydroxysteroid-4alpha-carboxylate + NAD(+) = a 3-oxosteroid + CO2 + NADH. Its pathway is steroid biosynthesis; zymosterol biosynthesis; zymosterol from lanosterol: step 4/6. Its function is as follows. Catalyzes the NAD(P)(+)-dependent oxidative decarboxylation of the C4 methyl groups of 4-alpha-carboxysterols in post-squalene cholesterol biosynthesis. This chain is Sterol-4-alpha-carboxylate 3-dehydrogenase, decarboxylating (nsdhl), found in Dictyostelium discoideum (Social amoeba).